The following is a 950-amino-acid chain: MVAAPSARRLVRRSHSALLAALTVLLLQTLVGWNFSSLHSGAGERRGGAAAGCTEQPAPPPAPAPRRERRDLPPGPAAPLGACCGGGGRGPPARARARALAGCPEEPRPQQPAGQGALPTRALDGYFSHRPKEKVRTDSNNENSVPKDFENVDNSNFAPRTQKQKHQPELAKKPPSRQKELLKRRLEQEEKGKGQSFPGKGTHEALPPGGRAAVNGSHGKDAPRQPHTRKSGGGSPELRYDQPPKCDISGKEAISALSRAKSKHCRQEIGDTYCRHKLGMLMPKKVTRFCSLEGKANKNVQWDEDSVEYMLANPVRIAFVLVVHGRASRQLQRMFKAIYHKDHFYYIHVDKRSNYLHRQVLQFARQYGNVRVTPWRMATIWGGASLLSTYLQSMRDLLEMTDWPWDFFINLSAADYPIRTNDQLVAFLSRYRDMNFLKSHGRDNARFIRKQGLDRLFLECDAHMWRLGDRRIPEGIAVDGGSDWFLLNRKFVEYVTFSTDDLVTKMKQFYSYTLLPAESFFHTVLENSPHCDTMVDNNLRITNWNRKLGCKCQYKHIVDWCGCSPNDFKPQDFHRFQQTARPTFFARKFEAVVNQEIIGQLDYYLYGNYPAGTPGLRSYWENVYDEPDGIHSLSDVALTLYHSFARLGLRRAESSLHVETGNSCRYYPMGHPASVHLYFLADRFQGFLIKHHATNLAVSKLETLETWVMPKKVFKIASPPSDFGRLQFSEVRVGTDWDAKERLFRNFGGLLGPMDEPVGMQKWGKGPNVTVTVIWVDPVNIIAATYDILIESTAEFTHYKPPLNLPLRPGVWTVKILHHWVPVAETKFLVAPLTFSNRQPIKPEEVLKLHNGPLRSAYMEQSFQSLNPVLSLPISPAQVEQARRNAGSTGATLEHWLDSLVGGTWTAMDICATGPTACPVMQTCTHTAWSSFSPDPKSELGAVKPDGRLR.

Over 1–17 (MVAAPSARRLVRRSHSA) the chain is Cytoplasmic. A helical; Signal-anchor for type II membrane protein transmembrane segment spans residues 18–38 (LLAALTVLLLQTLVGWNFSSL). The Lumenal portion of the chain corresponds to 39–950 (HSGAGERRGG…GAVKPDGRLR (912 aa)). Positions 42–246 (AGERRGGAAA…ELRYDQPPKC (205 aa)) are disordered. The span at 91-104 (PPARARARALAGCP) shows a compositional bias: low complexity. Over residues 134 to 150 (KVRTDSNNENSVPKDFE) the composition is skewed to basic and acidic residues. Polar residues predominate over residues 152–161 (VDNSNFAPRT). Residues 166–193 (HQPELAKKPPSRQKELLKRRLEQEEKGK) are compositionally biased toward basic and acidic residues. Residue Asn-215 is glycosylated (N-linked (GlcNAc...) asparagine). Intrachain disulfides connect Cys-246–Cys-274, Cys-290–Cys-531, Cys-550–Cys-563, and Cys-552–Cys-561. Residues Val-322, Asp-350, and 379-381 (TIW) contribute to the UDP-alpha-D-xylose site. N-linked (GlcNAc...) asparagine glycosylation is present at Asn-410. 483–484 (DW) serves as a coordination point for UDP-alpha-D-xylose. Residues Ser-564 and 587–588 (RK) contribute to the UDP-alpha-D-xylose site. Cystine bridges form between Cys-664/Cys-918 and Cys-911/Cys-924. Residue Asn-768 is glycosylated (N-linked (GlcNAc...) asparagine). A disordered region spans residues 931–950 (SFSPDPKSELGAVKPDGRLR).

The protein belongs to the glycosyltransferase 14 family. XylT subfamily. As to quaternary structure, monomer. A divalent metal cation serves as cofactor. In terms of processing, contains 7 disulfide bonds. N-glycosylated.

Its subcellular location is the golgi apparatus membrane. It carries out the reaction UDP-alpha-D-xylose + L-seryl-[protein] = 3-O-(beta-D-xylosyl)-L-seryl-[protein] + UDP + H(+). It participates in glycan metabolism; chondroitin sulfate biosynthesis. Its pathway is glycan metabolism; heparan sulfate biosynthesis. In terms of biological role, catalyzes the first step in the biosynthesis of chondroitin sulfate and dermatan sulfate proteoglycans, such as DCN. Transfers D-xylose from UDP-D-xylose to specific serine residues of the core protein. Required for normal maturation of chondrocytes during bone development, normal onset of ossification and normal embryonic and postnatal skeleton development, especially of the long bones. This chain is Xylosyltransferase 1 (XYLT1), found in Canis lupus familiaris (Dog).